The sequence spans 329 residues: Sex comb on midleg-like protein 1 (329 aa).

A disordered region spans residues 136 to 160 (SYSPTLPVSRRENNSPSNLPRPSFC). Phosphoserine occurs at positions 138 and 238. The SAM domain occupies 258–325 (WSVEAVVLFL…YYIDRLKQGK (68 aa)).

The protein belongs to the SCM family.

The protein localises to the nucleus. In terms of biological role, putative Polycomb group (PcG) protein. PcG proteins act by forming multiprotein complexes, which are required to maintain the transcriptionally repressive state of homeotic genes throughout development. May be involved in spermatogenesis during sexual maturation. The polypeptide is Sex comb on midleg-like protein 1 (SCML1) (Pongo pygmaeus (Bornean orangutan)).